The following is a 263-amino-acid chain: Receptor-transporting protein 1 (263 aa).

Residues 1 to 238 lie on the Cytoplasmic side of the membrane; the sequence is MRIFRPWRLR…QTGSGWNFCS (238 aa). The 3CxxC-type zinc finger occupies 88-197; it reads ASGRFHCSWC…GEFCEACQEG (110 aa). A helical membrane pass occupies residues 239–259; the sequence is IPWCLFWATVLLLIIYLQFSF. At 260 to 263 the chain is on the extracellular side; it reads RSSV.

This sequence belongs to the TMEM7 family. As to quaternary structure, interacts with olfactory receptors. As to expression, expressed in testis.

Its subcellular location is the cell membrane. Functionally, specifically promotes functional cell surface expression of olfactory receptors, but not of other GPCRs. This chain is Receptor-transporting protein 1 (RTP1), found in Homo sapiens (Human).